The following is a 2016-amino-acid chain: Sodium channel protein type 5 subunit alpha (2016 aa).

Over 1-129 the chain is Cytoplasmic; it reads MANFLLPRGT…IRRAAVKILV (129 aa). The tract at residues 28-56 is disordered; the sequence is MAEKQARGSTTLQESREGLPEEEAPRPQL. S36 carries the post-translational modification Phosphoserine. Position 38 is a phosphothreonine (T38). A compositionally biased stretch (basic and acidic residues) spans 41–52; that stretch reads ESREGLPEEEAP. The stretch at 113 to 420 is one I repeat; the sequence is VLSPFHPIRR…VVAMAYEEQN (308 aa). Residues 130 to 149 traverse the membrane as a helical segment; that stretch reads HSLFNMLIMCTILTNCVFMA. Residues 150–157 are Extracellular-facing; sequence QHDPPPWT. A helical transmembrane segment spans residues 158–179; that stretch reads KYVEYTFTAIYTFESLVKILAR. Residues 180–188 are Cytoplasmic-facing; the sequence is GFCLHAFTF. Residues 189 to 209 traverse the membrane as a helical segment; sequence LRDPWNWLDFSVIIMAYTTEF. Residues 210-216 lie on the Extracellular side of the membrane; sequence VDLGNVS. N-linked (GlcNAc...) asparagine glycosylation is present at N214. Residues 217 to 236 traverse the membrane as a helical segment; it reads ALRTFRVLRALKTISVISGL. The Cytoplasmic portion of the chain corresponds to 237-249; that stretch reads KTIVGALIQSVKK. The chain crosses the membrane as a helical span at residues 250 to 272; the sequence is LADVMVLTVFCLSVFALIGLQLF. Residues 273–357 are Extracellular-facing; that stretch reads MGNLRHKCVR…PDHGYTSFDS (85 aa). Residues C280 and C335 are joined by a disulfide bond. N283, N288, N291, N318, and N328 each carry an N-linked (GlcNAc...) asparagine glycan. The pore-forming intramembrane region spans 358–378; the sequence is FAWAFLALFRLMTQDCWERLY. At 379 to 386 the chain is on the extracellular side; it reads QQTLRSAG. A helical transmembrane segment spans residues 387–413; the sequence is KIYMIFFMLVIFLGSFYLVNLILAVVA. The Cytoplasmic portion of the chain corresponds to 414–719; it reads MAYEEQNQAT…VKLVVMDPFT (306 aa). 4 positions are modified to phosphoserine: S457, S460, S483, and S484. The interval 461 to 591 is disordered; sequence LEMSPLAPVN…APGHALHGKK (131 aa). Phosphothreonine is present on T486. Over residues 491–503 the composition is skewed to basic and acidic residues; that stretch reads EDRLPKSDSEDGP. Phosphoserine occurs at positions 497 and 510. Residues 509-528 show a composition bias toward polar residues; sequence LSLTRGLSRTSMKPRSSRGS. Residues R513 and R526 each carry the dimethylated arginine; alternate modification. R513 and R526 each carry omega-N-methylarginine; alternate. 4 positions are modified to phosphoserine: S539, S571, S664, and S667. Positions 570-580 are enriched in polar residues; the sequence is TSAQGQPSPGT. Position 680 is a dimethylated arginine; alternate (R680). The residue at position 680 (R680) is an Omega-N-methylarginine; alternate. The II repeat unit spans residues 699-969; sequence CCPLWMSIKQ…QLALARIQRG (271 aa). The chain crosses the membrane as a helical span at residues 720–737; sequence DLTITMCIVLNTLFMALE. The Extracellular portion of the chain corresponds to 738-746; sequence HYNMTSEFE. The N-linked (GlcNAc...) asparagine glycan is linked to N740. Residues 747–769 traverse the membrane as a helical segment; sequence EMLQVGNLVFTGIFTAEMTFKII. Over 770 to 775 the chain is Cytoplasmic; that stretch reads ALDPYY. The chain crosses the membrane as a helical span at residues 776-796; sequence YFQQGWNIFDSIIVILSLMEL. Over 797–806 the chain is Extracellular; it reads GLSRMSNLSV. N803 carries N-linked (GlcNAc...) asparagine glycosylation. Residues 807 to 821 form a helical membrane-spanning segment; that stretch reads LRSFRLLRVFKLAKS. Residues 822–838 lie on the Cytoplasmic side of the membrane; that stretch reads WPTLNTLIKIIGNSVGA. The chain crosses the membrane as a helical span at residues 839 to 860; it reads LGNLTLVLAIIVFIFAVVGMQL. At 861-884 the chain is on the extracellular side; that stretch reads FGKNYSELRDSDSGLLPRWHMMDF. An N-linked (GlcNAc...) asparagine glycan is attached at N864. The pore-forming intramembrane region spans 885 to 903; sequence FHAFLIIFRILCGEWIETM. The Extracellular portion of the chain corresponds to 904 to 912; sequence WDCMEVSGQ. Cysteines 906 and 915 form a disulfide. A helical membrane pass occupies residues 913 to 941; it reads SLCLLVFLLVMVIGNLVVLNLFLALLLSS. At 942-1203 the chain is on the cytoplasmic side; the sequence is FSADNLTAPD…LRKTCYHIVE (262 aa). The tract at residues 1005–1141 is disordered; the sequence is IATPYSPPPP…PEDSCSEGST (137 aa). The segment covering 1015-1030 has biased composition (basic and acidic residues); that stretch reads ETEKVPPTRKETRFEE. The span at 1033-1044 shows a compositional bias: low complexity; that stretch reads QPGQGTPGDPEP. Residues 1054–1071 show a composition bias toward acidic residues; it reads SDTDDQEEDEENSLGTEE. Low complexity predominate over residues 1096-1113; it reads SQVSATASSEAEASASQA. Residues 1187–1501 form an III repeat; the sequence is PGKVWWRLRK…KKYYNAMKKL (315 aa). Residues 1204–1225 traverse the membrane as a helical segment; sequence HSWFETFIIFMILLSSGALAFE. Over 1226-1236 the chain is Extracellular; that stretch reads DIYLEERKTIK. A helical transmembrane segment spans residues 1237-1259; the sequence is VLLEYADKMFTYVFVLEMLLKWV. Over 1260–1268 the chain is Cytoplasmic; it reads AYGFKKYFT. Residues 1269 to 1291 form a helical membrane-spanning segment; the sequence is NAWCWLDFLIVDVSLVSLVANTL. The Extracellular segment spans residues 1292-1297; sequence GFAEMG. The helical transmembrane segment at 1298-1317 threads the bilayer; it reads PIKSLRTLRALRPLRALSRF. At 1318–1330 the chain is on the cytoplasmic side; the sequence is EGMRVVVNALVGA. The chain crosses the membrane as a helical span at residues 1331–1355; the sequence is IPSIMNVLLVCLIFWLIFSIMGVNL. At 1356–1400 the chain is on the extracellular side; the sequence is FAGKFGRCINQTEGDLPLNYTIVNNKSQCESLNLTGELYWTKVKV. N-linked (GlcNAc...) asparagine glycans are attached at residues N1365, N1374, N1380, and N1388. The pore-forming intramembrane region spans 1401 to 1422; sequence NFDNVGAGYLALLQVATFKGWM. The Extracellular segment spans residues 1423–1445; sequence DIMYAAVDSRGYEEQPQWEYNLY. A helical transmembrane segment spans residues 1446 to 1470; the sequence is MYIYFVIFIIFGSFFTLNLFIGVII. Over 1471–1528 the chain is Cytoplasmic; it reads DNFNQQKKKLGGQDIFMTEEQKKYYNAMKKLGSKKPQKPIPRPLNKYQGFIFDIVTKQ. The residue at position 1503 (S1503) is a Phosphoserine; by PKC. The stretch at 1510-1807 is one IV repeat; it reads IPRPLNKYQG…WEKFDPEATQ (298 aa). A helical membrane pass occupies residues 1529 to 1547; it reads AFDVTIMFLICLNMVTMMV. The Extracellular segment spans residues 1548–1558; sequence ETDDQSPEKIN. Residues 1559 to 1580 form a helical membrane-spanning segment; it reads ILAKINLLFVAIFTGECIVKLA. At 1581 to 1589 the chain is on the cytoplasmic side; that stretch reads ALRHYYFTN. The helical transmembrane segment at 1590 to 1612 threads the bilayer; sequence SWNIFDFVVVILSIVGTVLSDII. At 1613-1619 the chain is on the extracellular side; sequence QKYFFSP. Residues 1620–1640 form a helical membrane-spanning segment; the sequence is TLFRVIRLARIGRILRLIRGA. The Cytoplasmic segment spans residues 1641 to 1650; the sequence is KGIRTLLFAL. The helical transmembrane segment at 1651-1679 threads the bilayer; that stretch reads MMSLPALFNIGLLLFLVMFIYSIFGMANF. Residues 1680–1697 lie on the Extracellular side of the membrane; sequence AYVKWEAGIDDMFNFQTF. An intramembrane region (pore-forming) is located at residues 1698-1714; it reads ANSMLCLFQITTSAGWD. Topologically, residues 1715–1745 are extracellular; it reads GLLSPILNTGPPYCDPTLPNSNGSRGDCGSP. N1736 carries an N-linked (GlcNAc...) asparagine glycan. A helical membrane pass occupies residues 1746 to 1771; it reads AVGILFFTTYIIISFLIVVNMYIAII. At 1772–2016 the chain is on the cytoplasmic side; sequence LENFSVATEE…SPDRDRESIV (245 aa). Positions 1839-1901 are interaction with FGF13; the sequence is DLPMVSGDRI…ITTTLRRKHE (63 aa). The region spanning 1901-1930 is the IQ domain; that stretch reads EEVSAMVIQRAFRRHLLQRSLKHASFLFRQ. Residues 1959–1979 are compositionally biased toward low complexity; that stretch reads PLGPPSSSSISSTSFPPSYDS. The tract at residues 1959 to 2016 is disordered; sequence PLGPPSSSSISSTSFPPSYDSVTRATSDNLQVRGSDYSHSEDLADFPPSPDRDRESIV. The segment at 1974–1977 is interaction with NEDD4, NEDD4L and WWP2; that stretch reads PPSY. Polar residues predominate over residues 1981–1990; the sequence is TRATSDNLQV.

This sequence belongs to the sodium channel (TC 1.A.1.10) family. Nav1.5/SCN5A subfamily. In terms of assembly, cannot form the same regulatory interactions with beta subunits as other Navs do. Interacts with the PDZ domain of the syntrophin SNTA1, SNTB1 and SNTB2. Interacts with NEDD4, NEDD4L, WWP2 and GPD1L. Interacts with CALM. Interacts with FGF13; the interaction is direct and FGF13 may regulate SNC5A density at membranes and function. May also interact with FGF12 and FGF14. Interacts with TMEM233. Interacts with the spider Jingzhaotoxin-I (AC P83974, AC B1P1B7, AC B1P1B8). Interacts with ANK3. Interacts with PKP2 (via N-terminus). Interacts with XIRP2; the interaction is required for normal action potential configuration in the heart. In terms of processing, ubiquitinated by NEDD4L; which promotes its endocytosis. Does not seem to be ubiquitinated by NEDD4 or WWP2. Post-translationally, phosphorylation at Ser-1503 by PKC in a highly conserved cytoplasmic loop slows inactivation of the sodium channel and reduces peak sodium currents. Regulated through phosphorylation by CaMK2D. Lacks the cysteine which covalently binds the conotoxin GVIIJ. This cysteine (position 868) is speculated in other sodium channel subunits alpha to be implied in covalent binding with the sodium channel subunit beta-2 or beta-4. In terms of processing, N-glycosylated at Asn-318, probably hinders potential interaction with regulatory subunits. In terms of tissue distribution, found in jejunal circular smooth muscle cells (at protein level). Expressed in human atrial and ventricular cardiac muscle but not in adult skeletal muscle, brain, myometrium, liver, or spleen. Isoform 4 is expressed in brain.

The protein localises to the cell membrane. The protein resides in the cytoplasm. It is found in the perinuclear region. It localises to the sarcolemma. Its subcellular location is the T-tubule. The protein localises to the cell junction. The enzyme catalyses Na(+)(in) = Na(+)(out). With respect to regulation, channel inactivation is regulated by intracellular calcium levels. It is a tetrodotoxin-resistant voltage-gated Na(+) channel (Nav). In terms of biological role, pore-forming subunit of Nav1.5, a voltage-gated sodium (Nav) channel that directly mediates the depolarizing phase of action potentials in excitable membranes. Navs, also called VGSCs (voltage-gated sodium channels) or VDSCs (voltage-dependent sodium channels), operate by switching between closed and open conformations depending on the voltage difference across the membrane. In the open conformation they allow Na(+) ions to selectively pass through the pore, along their electrochemical gradient. The influx of Na(+) ions provokes membrane depolarization, initiating the propagation of electrical signals throughout cells and tissues. Nav1.5 is the predominant sodium channel expressed in myocardial cells and it is responsible for the initial upstroke of the action potential in cardiac myocytes, thereby initiating the heartbeat. Required for normal electrical conduction including formation of the infranodal ventricular conduction system and normal action potential configuration, as a result of its interaction with XIRP2. This is Sodium channel protein type 5 subunit alpha from Homo sapiens (Human).